The chain runs to 55 residues: ATP synthase F(0) complex subunit 8 (55 aa).

A helical transmembrane segment spans residues 4-24 (LNPHPWFSIFITSWLILIIIL).

The protein belongs to the ATPase protein 8 family. In terms of assembly, component of the ATP synthase complex composed at least of ATP5F1A/subunit alpha, ATP5F1B/subunit beta, ATP5MC1/subunit c (homooctomer), MT-ATP6/subunit a, MT-ATP8/subunit 8, ATP5ME/subunit e, ATP5MF/subunit f, ATP5MG/subunit g, ATP5MK/subunit k, ATP5MJ/subunit j, ATP5F1C/subunit gamma, ATP5F1D/subunit delta, ATP5F1E/subunit epsilon, ATP5PF/subunit F6, ATP5PB/subunit b, ATP5PD/subunit d, ATP5PO/subunit OSCP. ATP synthase complex consists of a soluble F(1) head domain (subunits alpha(3) and beta(3)) - the catalytic core - and a membrane F(0) domain - the membrane proton channel (subunits c, a, 8, e, f, g, k and j). These two domains are linked by a central stalk (subunits gamma, delta, and epsilon) rotating inside the F1 region and a stationary peripheral stalk (subunits F6, b, d, and OSCP).

It localises to the mitochondrion membrane. Its function is as follows. Subunit 8, of the mitochondrial membrane ATP synthase complex (F(1)F(0) ATP synthase or Complex V) that produces ATP from ADP in the presence of a proton gradient across the membrane which is generated by electron transport complexes of the respiratory chain. ATP synthase complex consist of a soluble F(1) head domain - the catalytic core - and a membrane F(1) domain - the membrane proton channel. These two domains are linked by a central stalk rotating inside the F(1) region and a stationary peripheral stalk. During catalysis, ATP synthesis in the catalytic domain of F(1) is coupled via a rotary mechanism of the central stalk subunits to proton translocation. In vivo, can only synthesize ATP although its ATP hydrolase activity can be activated artificially in vitro. Part of the complex F(0) domain. This is ATP synthase F(0) complex subunit 8 from Pelomedusa subrufa (African side-necked turtle).